The following is a 310-amino-acid chain: UDP-N-acetylenolpyruvoylglucosamine reductase (310 aa).

The FAD-binding PCMH-type domain maps to 30–200; that stretch reads RVGGPAQWLA…VAAEFQLEPG (171 aa). The active site involves R179. S230 (proton donor) is an active-site residue. Residue E300 is part of the active site.

This sequence belongs to the MurB family. FAD serves as cofactor.

The protein localises to the cytoplasm. The enzyme catalyses UDP-N-acetyl-alpha-D-muramate + NADP(+) = UDP-N-acetyl-3-O-(1-carboxyvinyl)-alpha-D-glucosamine + NADPH + H(+). It functions in the pathway cell wall biogenesis; peptidoglycan biosynthesis. Cell wall formation. In Synechococcus sp. (strain WH7803), this protein is UDP-N-acetylenolpyruvoylglucosamine reductase.